The chain runs to 326 residues: MAVYTDVAADELADFLKTYDIGELLSYKGIAEGVENSNFLLHTTKGYFILTLYEKRVAVDDLPYFLGLMAHLAERGVSCPQPARNRDGAVYSTLSGRPAAIINFLEGLWPRKPNVAHCAGVGTALARMHLAGRDFPLVRKNPLSVSGWMSLFAQAADRADTVQAGLSALLSAELDVLARSWPTDLPEGVIHADLFPDNVFFLGDQLSGLIDFPFSCNDILAYDVAICLNAWCFEADHSLNVTKARAFFHAYGRERPLSQAELAALPLLARGAAIRFLLTRLVDWLNVPAGALVKPKDPLEYVRKLRFHQAVTSVRDYGLDGSGATA.

It belongs to the pseudomonas-type ThrB family.

It carries out the reaction L-homoserine + ATP = O-phospho-L-homoserine + ADP + H(+). The protein operates within amino-acid biosynthesis; L-threonine biosynthesis; L-threonine from L-aspartate: step 4/5. The polypeptide is Homoserine kinase (Bradyrhizobium sp. (strain BTAi1 / ATCC BAA-1182)).